Consider the following 559-residue polypeptide: Non-homologous end joining factor IFFO1 (559 aa).

Residues 21–57 (GPLGDSLGGDHFAGGGDLPPAPLSPAGPAAYSPPGPG) are disordered. The segment covering 39–57 (PPAPLSPAGPAAYSPPGPG) has biased composition (pro residues). An LMNA binding region spans residues 65–116 (ALRNDLGSNINVLKTLNLRFRCFLAKVHELERRNRLLEKQLQQALEEGKQGR). Positions 73 to 526 (NINVLKTLNL…RLITQSGDRK (454 aa)) constitute an IF rod domain. A coiled-coil region spans residues 85-117 (RCFLAKVHELERRNRLLEKQLQQALEEGKQGRR). Residues 158–187 (SPARSPAGPLAPSAASLSSSSTSTSTTYSS) are disordered. Residues 237–301 (EIRALYNVLA…LKVEQLKAEL (65 aa)) are a coiled coil. A disordered region spans residues 360–394 (SMGGRKRERKAAVEEDTSLSESEGPRQPDGDEEES). Residues 450 to 525 (EQEDSLEKVI…RRLITQSGDR (76 aa)) form an XCCR4 binding. Required for localization to the double-strand breaks (DSBs) region. Residues 455-501 (LEKVIKDTESLFKTREKEYQETIDQIELELATAKNDMNRHLHEYMEM) are a coiled coil. Residues 520 to 559 (TQSGDRKSPAFTAVPLSDPPPPPSEAEDSDRDVSSDSSMR) form a disordered region. A compositionally biased stretch (basic and acidic residues) spans 550-559 (RDVSSDSSMR).

This sequence belongs to the intermediate filament family. Forms a heterotetramer with XRCC4. The interaction with XRCC4 is direct, involves LIG4-free XRCC4 and leads to relocalization of IFFO1 at the double-strand break (DSB) sites. Interacts with LMNA; the interaction forms an interior nucleoskeleton and the recruitment to DNA double-strand breaks. As to expression, ubiquitously expressed.

Its subcellular location is the nucleus. The protein resides in the nucleoplasm. It is found in the nucleus inner membrane. It localises to the nucleus matrix. In terms of biological role, nuclear matrix protein involved in the immobilization of broken DNA ends and the suppression of chromosome translocation during DNA double-strand breaks (DSBs). Interacts with the nuclear lamina component LMNA, resulting in the formation of a nucleoskeleton that relocalizes to the DSB sites in a XRCC4-dependent manner and promotes the immobilization of the broken ends, thereby preventing chromosome translocation. Acts as a scaffold that allows the DNA repair protein XRCC4 and LMNA to assemble into a complex at the DSB sites. The polypeptide is Non-homologous end joining factor IFFO1 (Homo sapiens (Human)).